The following is a 372-amino-acid chain: Type II methyltransferase M1.HphI (372 aa).

Residues 45 to 372 (LTYIDLFSGA…EAVLKMNTNE (328 aa)) enclose the SAM-dependent MTase C5-type domain. C122 is an active-site residue.

It belongs to the class I-like SAM-binding methyltransferase superfamily. C5-methyltransferase family.

The enzyme catalyses a 2'-deoxycytidine in DNA + S-adenosyl-L-methionine = a 5-methyl-2'-deoxycytidine in DNA + S-adenosyl-L-homocysteine + H(+). Its function is as follows. A methylase that recognizes the double-stranded sequence 5'-GGTGA-3' and protects the DNA from cleavage by the HphI endonuclease. Probably methylates C-2 on the bottom strand. The chain is Type II methyltransferase M1.HphI (hphIAM) from Haemophilus parahaemolyticus.